The sequence spans 449 residues: Streptomycin-6-phosphate phosphatase (449 aa).

A signal peptide spans Met-1–Ala-32. Mg(2+) is bound at residue Asp-50. Asp-50 contacts Zn(2+). Ser-99 functions as the Phosphoserine intermediate in the catalytic mechanism. Positions 151 and 153 each coordinate Mg(2+). The tract at residues Ala-268–Asp-290 is disordered. Glu-321 is a binding site for Mg(2+). Positions 326, 330, 368, 369, and 412 each coordinate Zn(2+).

This sequence belongs to the alkaline phosphatase family. Mg(2+) serves as cofactor. It depends on Zn(2+) as a cofactor.

It localises to the secreted. It catalyses the reaction streptomycin 6-phosphate + H2O = streptomycin + phosphate. Its pathway is antibiotic biosynthesis; streptomycin biosynthesis. In terms of biological role, specifically cleaves both streptomycin-6-phosphate and, more slowly, streptomycin-3''-phosphate during the biosynthesis of streptomycin. This Streptomyces griseus protein is Streptomycin-6-phosphate phosphatase (strK).